Consider the following 111-residue polypeptide: Ferredoxin, 2Fe-2S (111 aa).

Residues Cys-10, Cys-23, Cys-56, and Cys-60 each contribute to the [2Fe-2S] cluster site.

As to quaternary structure, homodimer in solution. Requires [2Fe-2S] cluster as cofactor.

Ferredoxins are iron-sulfur proteins that transfer electrons in a wide variety of metabolic reactions. This chain is Ferredoxin, 2Fe-2S (fdx4), found in Aquifex aeolicus (strain VF5).